We begin with the raw amino-acid sequence, 488 residues long: Facilitated trehalose transporter Tret1-2 homolog (488 aa).

Topologically, residues methionine 1–glutamine 28 are cytoplasmic. Residues valine 29–threonine 49 form a helical membrane-spanning segment. Residues serine 50–serine 72 lie on the Extracellular side of the membrane. Residues tryptophan 73 to isoleucine 93 traverse the membrane as a helical segment. At glutamate 94–threonine 105 the chain is on the cytoplasmic side. Residues alanine 106–leucine 126 traverse the membrane as a helical segment. Residues cysteine 127 to arginine 129 lie on the Extracellular side of the membrane. The chain crosses the membrane as a helical span at residues phenylalanine 130–threonine 150. Residues leucine 151–glycine 160 are Cytoplasmic-facing. Residues leucine 161–methionine 181 traverse the membrane as a helical segment. Asparagine 182 is a glycosylation site (N-linked (GlcNAc...) asparagine). At asparagine 182 to serine 184 the chain is on the extracellular side. Residues methionine 185–proline 205 form a helical membrane-spanning segment. At glutamate 206 to proline 268 the chain is on the cytoplasmic side. Residues leucine 269 to phenylalanine 289 traverse the membrane as a helical segment. Residues tyrosine 290–asparagine 305 lie on the Extracellular side of the membrane. Residues leucine 306–isoleucine 326 traverse the membrane as a helical segment. Residues aspartate 327–lysine 332 lie on the Cytoplasmic side of the membrane. The helical transmembrane segment at isoleucine 333 to phenylalanine 353 threads the bilayer. At tyrosine 354–cysteine 372 the chain is on the extracellular side. A helical membrane pass occupies residues phenylalanine 373 to glycine 393. Topologically, residues glutamate 394–glycine 402 are cytoplasmic. Residues proline 403–phenylalanine 423 form a helical membrane-spanning segment. At glutamine 424–histidine 433 the chain is on the extracellular side. The helical transmembrane segment at glycine 434 to valine 454 threads the bilayer. Residues proline 455–methionine 488 lie on the Cytoplasmic side of the membrane.

This sequence belongs to the major facilitator superfamily. Sugar transporter (TC 2.A.1.1) family. Trehalose transporter subfamily.

The protein localises to the cell membrane. In terms of biological role, fails to transport trehalose. This Drosophila simulans (Fruit fly) protein is Facilitated trehalose transporter Tret1-2 homolog.